We begin with the raw amino-acid sequence, 344 residues long: N-acetyl-gamma-glutamyl-phosphate reductase (344 aa).

Cysteine 147 is an active-site residue.

It belongs to the NAGSA dehydrogenase family. Type 1 subfamily.

The protein localises to the cytoplasm. It carries out the reaction N-acetyl-L-glutamate 5-semialdehyde + phosphate + NADP(+) = N-acetyl-L-glutamyl 5-phosphate + NADPH + H(+). The protein operates within amino-acid biosynthesis; L-arginine biosynthesis; N(2)-acetyl-L-ornithine from L-glutamate: step 3/4. Catalyzes the NADPH-dependent reduction of N-acetyl-5-glutamyl phosphate to yield N-acetyl-L-glutamate 5-semialdehyde. This Bacillus amyloliquefaciens (Bacillus velezensis) protein is N-acetyl-gamma-glutamyl-phosphate reductase.